Reading from the N-terminus, the 380-residue chain is Cytochrome b (380 aa).

4 helical membrane-spanning segments follow: residues 33–53 (FGSLLGLCLATQILTGLFLAM), 77–98 (WLIRNIHANGASFFFICIYMHI), 113–133 (WNIGVVLLLLTMMTAFVGYVL), and 178–198 (FFAFHFLFPFVIAAATVLHLL). Heme b contacts are provided by His83 and His97. His182 and His196 together coordinate heme b. His201 provides a ligand contact to a ubiquinone. A run of 4 helical transmembrane segments spans residues 226–246 (YKDLLGFVAMLLGLTSLALFA), 288–308 (LGGVLALLFSILVLMVVPILH), 320–340 (LTQFLFWALVADMLILTWIGG), and 347–367 (FIIIGQVASVIYFTIFLVLSP).

It belongs to the cytochrome b family. As to quaternary structure, the cytochrome bc1 complex contains 3 respiratory subunits (MT-CYB, CYC1 and UQCRFS1), 2 core proteins (UQCRC1 and UQCRC2) and probably 6 low-molecular weight proteins. Requires heme b as cofactor.

The protein resides in the mitochondrion inner membrane. Functionally, component of the ubiquinol-cytochrome c reductase complex (complex III or cytochrome b-c1 complex) that is part of the mitochondrial respiratory chain. The b-c1 complex mediates electron transfer from ubiquinol to cytochrome c. Contributes to the generation of a proton gradient across the mitochondrial membrane that is then used for ATP synthesis. The sequence is that of Cytochrome b (mt-cyb) from Oncorhynchus mykiss (Rainbow trout).